The following is a 378-amino-acid chain: Anhydro-N-acetylmuramic acid kinase (378 aa).

22–29 (GTSLDGAD) provides a ligand contact to ATP.

It belongs to the anhydro-N-acetylmuramic acid kinase family.

The catalysed reaction is 1,6-anhydro-N-acetyl-beta-muramate + ATP + H2O = N-acetyl-D-muramate 6-phosphate + ADP + H(+). It participates in amino-sugar metabolism; 1,6-anhydro-N-acetylmuramate degradation. Its pathway is cell wall biogenesis; peptidoglycan recycling. In terms of biological role, catalyzes the specific phosphorylation of 1,6-anhydro-N-acetylmuramic acid (anhMurNAc) with the simultaneous cleavage of the 1,6-anhydro ring, generating MurNAc-6-P. Is required for the utilization of anhMurNAc either imported from the medium or derived from its own cell wall murein, and thus plays a role in cell wall recycling. The polypeptide is Anhydro-N-acetylmuramic acid kinase (Bordetella petrii (strain ATCC BAA-461 / DSM 12804 / CCUG 43448)).